Reading from the N-terminus, the 134-residue chain is MKFSRFVSILVLFGLLTKVQGPSLTDFLFPRRCPRFREECEHRERDLCTRDRDCQKREKCCIFSCGKKCLNPQQDICSLPKDSGYCMAYFPRWWYNKKNGTCQLFIYGGCQGNNNNFQSQSICQNACEKKSNST.

An N-terminal signal peptide occupies residues 1 to 21 (MKFSRFVSILVLFGLLTKVQG). A WAP domain is found at 26–73 (DFLFPRRCPRFREECEHRERDLCTRDRDCQKREKCCIFSCGKKCLNPQ). Disulfide bonds link Cys-33–Cys-61, Cys-40–Cys-65, Cys-48–Cys-60, Cys-54–Cys-69, Cys-77–Cys-127, Cys-86–Cys-110, and Cys-102–Cys-123. Residues 77-127 (CSLPKDSGYCMAYFPRWWYNKKNGTCQLFIYGGCQGNNNNFQSQSICQNAC) enclose the BPTI/Kunitz inhibitor domain. The segment at 102–133 (CQLFIYGGCQGNNNNFQSQSICQNACEKKSNS) is interaction with SEMG1. The interval 117–133 (FQSQSICQNACEKKSNS) is interaction with LTF.

As to quaternary structure, monomer. Homodimer. Homomultimers. Interacts with SEMG1 (via 164-283 AA). Interacts with LTF. Found in a complex with LTF, CLU, EPPIN and SEMG1.

It localises to the secreted. Its function is as follows. Serine protease inhibitor that plays an essential role in male reproduction and fertility. Modulates the hydrolysis of SEMG1 by KLK3/PSA (a serine protease), provides antimicrobial protection for spermatozoa in the ejaculate coagulum, and binds SEMG1 thereby inhibiting sperm motility. This Rattus norvegicus (Rat) protein is Eppin (Eppin).